Reading from the N-terminus, the 129-residue chain is Small ribosomal subunit protein uS11 (129 aa).

It belongs to the universal ribosomal protein uS11 family. As to quaternary structure, part of the 30S ribosomal subunit. Interacts with proteins S7 and S18. Binds to IF-3.

Located on the platform of the 30S subunit, it bridges several disparate RNA helices of the 16S rRNA. Forms part of the Shine-Dalgarno cleft in the 70S ribosome. The sequence is that of Small ribosomal subunit protein uS11 from Lactobacillus delbrueckii subsp. bulgaricus (strain ATCC 11842 / DSM 20081 / BCRC 10696 / JCM 1002 / NBRC 13953 / NCIMB 11778 / NCTC 12712 / WDCM 00102 / Lb 14).